Here is a 189-residue protein sequence, read N- to C-terminus: dTTP/UTP pyrophosphatase (189 aa).

Asp-71 acts as the Proton acceptor in catalysis.

This sequence belongs to the Maf family. YhdE subfamily. A divalent metal cation serves as cofactor.

It is found in the cytoplasm. The enzyme catalyses dTTP + H2O = dTMP + diphosphate + H(+). The catalysed reaction is UTP + H2O = UMP + diphosphate + H(+). Functionally, nucleoside triphosphate pyrophosphatase that hydrolyzes dTTP and UTP. May have a dual role in cell division arrest and in preventing the incorporation of modified nucleotides into cellular nucleic acids. This chain is dTTP/UTP pyrophosphatase, found in Pseudoalteromonas translucida (strain TAC 125).